Reading from the N-terminus, the 151-residue chain is Putative pre-16S rRNA nuclease (151 aa).

This sequence belongs to the YqgF nuclease family.

The protein resides in the cytoplasm. Functionally, could be a nuclease involved in processing of the 5'-end of pre-16S rRNA. This chain is Putative pre-16S rRNA nuclease, found in Neisseria meningitidis serogroup B (strain ATCC BAA-335 / MC58).